The following is a 465-amino-acid chain: 3-isopropylmalate dehydratase large subunit (465 aa).

[4Fe-4S] cluster contacts are provided by Cys346, Cys406, and Cys409.

Belongs to the aconitase/IPM isomerase family. LeuC type 1 subfamily. As to quaternary structure, heterodimer of LeuC and LeuD. [4Fe-4S] cluster is required as a cofactor.

It catalyses the reaction (2R,3S)-3-isopropylmalate = (2S)-2-isopropylmalate. It participates in amino-acid biosynthesis; L-leucine biosynthesis; L-leucine from 3-methyl-2-oxobutanoate: step 2/4. Catalyzes the isomerization between 2-isopropylmalate and 3-isopropylmalate, via the formation of 2-isopropylmaleate. In Leptospira interrogans serogroup Icterohaemorrhagiae serovar copenhageni (strain Fiocruz L1-130), this protein is 3-isopropylmalate dehydratase large subunit.